Consider the following 1943-residue polypeptide: Cadherin-86C (1943 aa).

Positions 1-102 (MASTSSSQPE…QNQQMQHHWP (102 aa)) are disordered. At 1 to 934 (MASTSSSQPE…TDTQYKAENK (934 aa)) the chain is on the extracellular side. Asn12 is a glycosylation site (N-linked (GlcNAc...) asparagine). Residues 50–89 (PHHHHHHHHQHHHHHRLKQHHRHHHHHHRLQHHHHHHQQQ) are compositionally biased toward basic residues. Over residues 90–100 (HNHQNQQMQHH) the composition is skewed to low complexity. 5 Cadherin domains span residues 238–366 (CSIT…PPVF), 367–483 (TSAP…PPYF), 484–600 (ENDH…APVF), 601–708 (EQPA…TPIF), and 709–832 (DKDL…SVKF). N-linked (GlcNAc...) asparagine glycosylation is found at Asn244, Asn419, Asn531, Asn579, Asn585, Asn612, and Asn645. A glycan (N-linked (GlcNAc...) asparagine) is linked at Asn912. A helical membrane pass occupies residues 935–955 (VLFWLLILLATLVALTILILL). The Cytoplasmic segment spans residues 956–1943 (LCCICSWCPL…NSGGESPQYS (988 aa)). 5 disordered regions span residues 1038-1058 (DVGR…SAEE), 1390-1442 (KPSR…RKRI), 1458-1516 (EEEE…SHNR), 1546-1695 (YKHS…ERNV), and 1707-1895 (KSSV…DDHD). The segment covering 1047–1058 (EGDRRHIQSAEE) has biased composition (basic and acidic residues). Positions 1426 to 1442 (IKRRRTKKRPRQPRKRI) are enriched in basic residues. Basic and acidic residues-rich tracts occupy residues 1486–1497 (QLSDESRKDQSR) and 1507–1516 (HRSESDSHNR). Residues 1552-1568 (DFDEDDTEYSIDSDGDE) show a composition bias toward acidic residues. The segment covering 1580–1602 (QENERYRRQERTYAEPENPVDRK) has biased composition (basic and acidic residues). Polar residues predominate over residues 1633–1667 (KQTSSEPPHNRVSISKYESTVTENGRKLMSTSTEI). Residues 1709–1724 (SVSGRTSTESSKSQPS) are compositionally biased toward low complexity. Basic and acidic residues-rich tracts occupy residues 1754-1764 (TGGRYKPEPAP), 1774-1793 (LLKE…ETDT), 1800-1810 (HSEHRFERENA), and 1837-1863 (KESK…ENEV). Over residues 1879-1889 (HPTQKQLNAST) the composition is skewed to polar residues.

As cell intercalation proceeds, a row of stigmatophore cells surrounding the spiracular chamber show expression of Cad86C. Expression is regulated by the Abd-B cascade, requiring sal. Expressed in a broad region of the morphogenetic furrow and in clusters of cells posterior to the morphogenetic furrow. Weakly expressed in the epithelium of wing imaginal disks. In eye imaginal disk cells within the morphogenetic furrow, expression is localized to the apical region.

It localises to the cell membrane. In terms of biological role, cadherins are calcium-dependent cell adhesion proteins. They preferentially interact with themselves in a homophilic manner in connecting cells. In Drosophila melanogaster (Fruit fly), this protein is Cadherin-86C (Cad86C).